The chain runs to 181 residues: Lipoprotein signal peptidase (181 aa).

Helical transmembrane passes span 25 to 45 (LFYK…QVFI), 86 to 106 (LVYF…VFMV), and 107 to 127 (KYSY…NFFD). Catalysis depends on residues Asp138 and Asp153. The helical transmembrane segment at 149–169 (FNFADCCITFGFIGLFFCFLI) threads the bilayer.

It belongs to the peptidase A8 family.

The protein resides in the cell membrane. It carries out the reaction Release of signal peptides from bacterial membrane prolipoproteins. Hydrolyzes -Xaa-Yaa-Zaa-|-(S,diacylglyceryl)Cys-, in which Xaa is hydrophobic (preferably Leu), and Yaa (Ala or Ser) and Zaa (Gly or Ala) have small, neutral side chains.. It participates in protein modification; lipoprotein biosynthesis (signal peptide cleavage). This protein specifically catalyzes the removal of signal peptides from prolipoproteins. The polypeptide is Lipoprotein signal peptidase (Mycoplasma genitalium (strain ATCC 33530 / DSM 19775 / NCTC 10195 / G37) (Mycoplasmoides genitalium)).